The primary structure comprises 194 residues: Recombination protein RecR (194 aa).

The segment at 53-68 adopts a C4-type zinc-finger fold; the sequence is CEICFNLDVTSPCSIC. Positions 76 to 171 constitute a Toprim domain; sequence SLLCIVEELG…KVTRLACGIP (96 aa).

Belongs to the RecR family.

Its function is as follows. May play a role in DNA repair. It seems to be involved in an RecBC-independent recombinational process of DNA repair. It may act with RecF and RecO. The sequence is that of Recombination protein RecR from Anaplasma phagocytophilum (strain HZ).